The chain runs to 572 residues: NADP-dependent malic enzyme (572 aa).

Met1 is subject to N-acetylmethionine. Catalysis depends on Tyr102, which acts as the Proton donor. Residue Arg155 coordinates NADP(+). Lys173 (proton acceptor) is an active-site residue. A divalent metal cation is bound by residues Glu245, Asp246, and Asp269. Residues Asp269 and 301–318 each bind NADP(+); that span reads GAGE…MALE. Position 336 is a phosphoserine (Ser336). Asn408 lines the NADP(+) pocket.

This sequence belongs to the malic enzymes family. Homotetramer. Mg(2+) serves as cofactor. Mn(2+) is required as a cofactor. As to expression, expressed in all tissues tested including liver, placenta and white adipose tissue.

Its subcellular location is the cytoplasm. It carries out the reaction (S)-malate + NADP(+) = pyruvate + CO2 + NADPH. It catalyses the reaction oxaloacetate + H(+) = pyruvate + CO2. Its function is as follows. Catalyzes the oxidative decarboxylation of (S)-malate in the presence of NADP(+) and divalent metal ions, and decarboxylation of oxaloacetate. The protein is NADP-dependent malic enzyme of Homo sapiens (Human).